The sequence spans 20 residues: QQRFPQRYVQLVITVDHVMN.

The Peptidase M12B domain occupies 7-20 (RYVQLVITVDHVMN).

The cofactor is Zn(2+).

Its subcellular location is the secreted. Its function is as follows. Hydrolyzes alpha and beta chains of human fibrinogen and human fibrin. No activity against the gamma chain of human fibrinogen, human thrombin, bovine serum albumin, ovalbumin and hemoglobin. Has anticoagulant activity on human plasma and protects mice against death due from experimentally induced platelet thromboembolism with an ED(50) of 40 ug/kg. This is Fibrinolytic zinc metalloproteinase from Ganoderma lucidum (Ling zhi medicinal fungus).